We begin with the raw amino-acid sequence, 112 residues long: Nitrogen regulatory protein P-II (112 aa).

The residue at position 51 (Tyr-51) is an O-UMP-tyrosine.

It belongs to the P(II) protein family. In terms of assembly, homotrimer.

Functionally, in nitrogen-limiting conditions, when the ratio of Gln to 2-ketoglutarate decreases, P-II is uridylylated to P-II-UMP. P-II-UMP allows the deadenylation of glutamine synthetase (GS), thus activating the enzyme. Conversely, in nitrogen excess P-II is deuridylated and promotes the adenylation of GS. P-II indirectly controls the transcription of the GS gene (glnA). P-II prevents NR-II-catalyzed conversion of NR-I to NR-I-phosphate, the transcriptional activator of glnA. When P-II is uridylylated to P-II-UMP, these events are reversed. This Mesorhizobium japonicum (strain LMG 29417 / CECT 9101 / MAFF 303099) (Mesorhizobium loti (strain MAFF 303099)) protein is Nitrogen regulatory protein P-II (glnB).